The following is a 334-amino-acid chain: MVISLKNRNFLKLLDYTPAEIQHLIDLAIELKAAKKAGCEKQTLIGKNIALIFEKTSTRTRCAFEVAAFDQGAQVTYLGPSGSQIGHKESMKDTARVLGRMYDGIEYRGFGQHIVEELGEYAGVPVWNGLTDEFHPTQILADLMTMLEHAPGKTLPELSFAYLGDARNNMGNSLMVGAAKMGMDIRLIAPKSFWPDAALVAQCREIASVTGARITLTESVEDGVHGVDFLYTDVWVSMGEPKEAWAERVSLMTPYQVNQQVVNATGNPDVKFMHCLPAFHNEHTKVGREIEMAYGLKGLEVTEEVFESAGSIVFDEAENRMHTIKAVMVATLGD.

Residues 57-60 (STRT), Gln-84, Arg-108, and 135-138 (HPTQ) each bind carbamoyl phosphate. Residues Asn-169, Asp-233, and 237-238 (SM) each bind L-ornithine. Carbamoyl phosphate is bound by residues 275–276 (CL) and Arg-320.

It belongs to the aspartate/ornithine carbamoyltransferase superfamily. OTCase family.

Its subcellular location is the cytoplasm. It catalyses the reaction carbamoyl phosphate + L-ornithine = L-citrulline + phosphate + H(+). The protein operates within amino-acid degradation; L-arginine degradation via ADI pathway; carbamoyl phosphate from L-arginine: step 2/2. Functionally, reversibly catalyzes the transfer of the carbamoyl group from carbamoyl phosphate (CP) to the N(epsilon) atom of ornithine (ORN) to produce L-citrulline. This is Ornithine carbamoyltransferase, catabolic (arcB) from Salmonella typhimurium (strain LT2 / SGSC1412 / ATCC 700720).